A 152-amino-acid chain; its full sequence is Single-stranded DNA-binding protein, mitochondrial (152 aa).

The N-terminal 16 residues, 1–16 (MFRRPVLQVFRQFVRH), are a transit peptide targeting the mitochondrion. Residues 30–141 (LNRVQLLGRV…IIAGKKLVVH (112 aa)) enclose the SSB domain. S67 and S79 each carry phosphoserine. An N6-acetyllysine modification is found at K113. At K122 the chain carries N6-succinyllysine.

Homotetramer. Interacts with MPG/AAG, through inhibition of its glycosylase activity it potentially prevents formation of DNA breaks in ssDNA, ensuring that base removal primarily occurs in dsDNA. Interacts with POLDIP2. Interacts with PRIMPOL. In terms of tissue distribution, expressed in all the layers of the retina (at protein level).

The protein resides in the mitochondrion. It is found in the mitochondrion matrix. Its subcellular location is the mitochondrion nucleoid. In terms of biological role, binds preferentially and cooperatively to pyrimidine rich single-stranded DNA (ss-DNA). In vitro, required to maintain the copy number of mitochondrial DNA (mtDNA) and plays a crucial role during mtDNA replication by stimulating the activity of the replisome components POLG and TWNK at the replication fork. Promotes the activity of the gamma complex polymerase POLG, largely by organizing the template DNA and eliminating secondary structures to favor ss-DNA conformations that facilitate POLG activity. In addition it is able to promote the 5'-3' unwinding activity of the mtDNA helicase TWNK. May also function in mtDNA repair. The protein is Single-stranded DNA-binding protein, mitochondrial (Ssbp1) of Mus musculus (Mouse).